The primary structure comprises 426 residues: Glutamate-1-semialdehyde 2,1-aminomutase (426 aa).

An N6-(pyridoxal phosphate)lysine modification is found at K265.

This sequence belongs to the class-III pyridoxal-phosphate-dependent aminotransferase family. HemL subfamily. As to quaternary structure, homodimer. The cofactor is pyridoxal 5'-phosphate.

The protein localises to the cytoplasm. The enzyme catalyses (S)-4-amino-5-oxopentanoate = 5-aminolevulinate. The protein operates within porphyrin-containing compound metabolism; protoporphyrin-IX biosynthesis; 5-aminolevulinate from L-glutamyl-tRNA(Glu): step 2/2. The polypeptide is Glutamate-1-semialdehyde 2,1-aminomutase (Salmonella gallinarum (strain 287/91 / NCTC 13346)).